The sequence spans 2209 residues: Genome polyprotein (2209 aa).

Residue G2 is the site of N-myristoyl glycine; by host attachment. At 2–1520 (GAQVSSQKVG…NINRAMTILQ (1519 aa)) the chain is on the cytoplasmic side. The amphipathic alpha-helix stretch occupies residues 580–600 (GLGQMLESMIDNTVRETVGAA). Residues 599–619 (AATSRDALPNTEASGPTHSKE) are disordered. Active-site for protease 2A activity residues include H901 and D919. Residues C936 and C938 each coordinate Zn(2+). C990 acts as the For protease 2A activity in catalysis. Zn(2+) is bound by residues C996 and H998. The segment at 1128–1200 (GDSWLKKFTE…HQSCPSQEHQ (73 aa)) is membrane-binding. The oligomerization stretch occupies residues 1128-1266 (GDSWLKKFTE…SPGTGKSVAT (139 aa)). An RNA-binding region spans residues 1149-1153 (SNKIS). One can recognise an SF3 helicase domain in the interval 1232 to 1388 (EHTINNYIQF…NEYSRDGKLN (157 aa)). 1256–1263 (GSPGTGKS) lines the ATP pocket. Residues C1396, C1399, C1408, and C1413 each coordinate Zn(2+). The segment at 1396–1413 (CKNCHQPANFKRCCPLVC) adopts a C4-type zinc-finger fold. The RNA-binding stretch occupies residues 1440 to 1447 (ERNRRSNI). Residues 1451–1456 (MEALFQ) form an oligomerization region. An intramembrane segment occupies 1521 to 1536 (AVTTFAAVAGVVYVMY). Residues 1537–2209 (KLFAGHQGAY…TLYRRWLDSF (673 aa)) lie on the Cytoplasmic side of the membrane. Y1546 bears the O-(5'-phospho-RNA)-tyrosine mark. Y1546 carries the O-UMP-tyrosine; transient modification. The Peptidase C3 domain occupies 1566–1744 (GPGFDYAVAM…FAAALKRSYF (179 aa)). Residues H1605, E1636, and C1712 each act as for protease 3C activity in the active site. One can recognise a RdRp catalytic domain in the interval 1975-2090 (EKLFAFDYTG…SYPHEVDASL (116 aa)). Residues D1981 and D2076 each coordinate Mg(2+).

It belongs to the picornaviruses polyprotein family. In terms of assembly, interacts with capsid protein VP1 and capsid protein VP3 to form heterotrimeric protomers. As to quaternary structure, interacts with capsid protein VP0, and capsid protein VP3 to form heterotrimeric protomers. Five protomers subsequently associate to form pentamers which serve as building blocks for the capsid. Interacts with capsid protein VP2, capsid protein VP3 and capsid protein VP4 following cleavage of capsid protein VP0. Interacts with human PVR. Interacts with capsid protein VP1 and capsid protein VP3 in the mature capsid. In terms of assembly, interacts with capsid protein VP0 and capsid protein VP1 to form heterotrimeric protomers. Five protomers subsequently associate to form pentamers which serve as building blocks for the capsid. Interacts with capsid protein VP4 in the mature capsid. Interacts with protein 2C; this interaction may be important for virion morphogenesis. As to quaternary structure, interacts with capsid protein VP1 and capsid protein VP3. Homodimer. In terms of assembly, homohexamer; forms a hexameric ring structure with 6-fold symmetry characteristic of AAA+ ATPases. Interacts (via N-terminus) with host RTN3 (via reticulon domain); this interaction is important for viral replication. Interacts with capsid protein VP3; this interaction may be important for virion morphogenesis. As to quaternary structure, interacts with protein 3CD. Homodimer. Interacts with host GBF1. Interacts (via GOLD domain) with host ACBD3 (via GOLD domain); this interaction allows the formation of a viral protein 3A/ACBD3 heterotetramer with a 2:2 stoichiometry, which will stimulate the recruitment of host PI4KB in order to synthesize PI4P at the viral RNA replication sites. In terms of assembly, interacts with RNA-directed RNA polymerase. As to quaternary structure, interacts with protein 3AB and with RNA-directed RNA polymerase. Interacts with Viral protein genome-linked and with protein 3CD. Requires Mg(2+) as cofactor. In terms of processing, specific enzymatic cleavages in vivo by the viral proteases yield processing intermediates and the mature proteins. Post-translationally, myristoylation is required for the formation of pentamers during virus assembly. Further assembly of 12 pentamers and a molecule of genomic RNA generates the provirion. During virion maturation, immature virions are rendered infectious following cleavage of VP0 into VP4 and VP2. This maturation seems to be an autocatalytic event triggered by the presence of RNA in the capsid and it is followed by a conformational change infectious virion. In terms of processing, myristoylation is required during RNA encapsidation and formation of the mature virus particle. Post-translationally, VPg is uridylylated by the polymerase into VPg-pUpU. This acts as a nucleotide-peptide primer for the genomic RNA replication.

It localises to the virion. The protein localises to the host cytoplasm. Its subcellular location is the host cytoplasmic vesicle membrane. It is found in the host nucleus. The catalysed reaction is RNA(n) + a ribonucleoside 5'-triphosphate = RNA(n+1) + diphosphate. The enzyme catalyses Selective cleavage of Tyr-|-Gly bond in the picornavirus polyprotein.. It catalyses the reaction a ribonucleoside 5'-triphosphate + H2O = a ribonucleoside 5'-diphosphate + phosphate + H(+). It carries out the reaction Selective cleavage of Gln-|-Gly bond in the poliovirus polyprotein. In other picornavirus reactions Glu may be substituted for Gln, and Ser or Thr for Gly.. Replication or transcription is subject to high level of random mutations by the nucleotide analog ribavirin. In terms of biological role, forms an icosahedral capsid of pseudo T=3 symmetry with capsid proteins VP2 and VP3. The capsid is 300 Angstroms in diameter, composed of 60 copies of each capsid protein and enclosing the viral positive strand RNA genome. Capsid protein VP1 mainly forms the vertices of the capsid. Capsid protein VP1 interacts with host cell receptor PVR to provide virion attachment to target host epithelial cells. This attachment induces virion internalization predominantly through clathrin- and caveolin-independent endocytosis in Hela cells and through caveolin-mediated endocytosis in brain microvascular endothelial cells. Tyrosine kinases are probably involved in the entry process. Virus binding to PVR induces increased junctional permeability and rearrangement of junctional proteins. Modulation of endothelial tight junctions, as well as cytolytic infection of endothelial cells themselves, may result in loss of endothelial integrity which may help the virus to reach the CNS. After binding to its receptor, the capsid undergoes conformational changes. Capsid protein VP1 N-terminus (that contains an amphipathic alpha-helix) and capsid protein VP4 are externalized. Together, they shape a pore in the host membrane through which viral genome is translocated to host cell cytoplasm. Functionally, forms an icosahedral capsid of pseudo T=3 symmetry with capsid proteins VP1 and VP3. The capsid is 300 Angstroms in diameter, composed of 60 copies of each capsid protein and enclosing the viral positive strand RNA genome. Its function is as follows. Forms an icosahedral capsid of pseudo T=3 symmetry with capsid proteins VP2 and VP1. The capsid is 300 Angstroms in diameter, composed of 60 copies of each capsid protein and enclosing the viral positive strand RNA genome. Lies on the inner surface of the capsid shell. After binding to the host receptor, the capsid undergoes conformational changes. Capsid protein VP4 is released, Capsid protein VP1 N-terminus is externalized, and together, they shape a pore in the host membrane through which the viral genome is translocated into the host cell cytoplasm. In terms of biological role, component of immature procapsids, which is cleaved into capsid proteins VP4 and VP2 after maturation. Allows the capsid to remain inactive before the maturation step. Functionally, cysteine protease that cleaves viral polyprotein and specific host proteins. It is responsible for the autocatalytic cleavage between the P1 and P2 regions, which is the first cleavage occurring in the polyprotein. Also cleaves the host translation initiation factor EIF4G1, in order to shut down the capped cellular mRNA translation. Inhibits the host nucleus-cytoplasm protein and RNA trafficking by cleaving host members of the nuclear pores including NUP98, NUP62 and NUP153. Counteracts stress granule formation probably by antagonizing its assembly or promoting its dissassembly. Cleaves and inhibits host IFIH1/MDA5, thereby inhibiting the type-I IFN production and the establishment of the antiviral state. Cleaves and inhibits host MAVS, thereby inhibiting the type-I IFN production and the establishment of the antiviral state. Its function is as follows. Plays an essential role in the virus replication cycle by acting as a viroporin. Creates a pore in the host endoplasmic reticulum and as a consequence releases Ca2+ in the cytoplasm of infected cell. In turn, high levels of cytoplasmic calcium may trigger membrane trafficking and transport of viral ER-associated proteins to viroplasms, sites of viral genome replication. Induces and associates with structural rearrangements of intracellular membranes. Displays RNA-binding, nucleotide binding and NTPase activities. May play a role in virion morphogenesis and viral RNA encapsidation by interacting with the capsid protein VP3. In terms of biological role, localizes the viral replication complex to the surface of membranous vesicles. Together with protein 3CD binds the Cis-Active RNA Element (CRE) which is involved in RNA synthesis initiation. Acts as a cofactor to stimulate the activity of 3D polymerase, maybe through a nucleid acid chaperone activity. Functionally, localizes the viral replication complex to the surface of membranous vesicles. It inhibits host cell endoplasmic reticulum-to-Golgi apparatus transport and causes the disassembly of the Golgi complex, possibly through GBF1 interaction. This would result in depletion of MHC, trail receptors and IFN receptors at the host cell surface. Plays an essential role in viral RNA replication by recruiting ACBD3 and PI4KB at the viral replication sites, thereby allowing the formation of the rearranged membranous structures where viral replication takes place. Its function is as follows. Acts as a primer for viral RNA replication and remains covalently bound to viral genomic RNA. VPg is uridylylated prior to priming replication into VPg-pUpU. The oriI viral genomic sequence may act as a template for this. The VPg-pUpU is then used as primer on the genomic RNA poly(A) by the RNA-dependent RNA polymerase to replicate the viral genome. During genome replication, the VPg-RNA linkage is removed by the host TDP2, thereby accelerating replication. During the late stage of the replication cycle, host TDP2 is excluded from sites of viral RNA synthesis and encapsidation, allowing for the generation of progeny virions. Involved in the viral replication complex and viral polypeptide maturation. It exhibits protease activity with a specificity and catalytic efficiency that is different from protease 3C. Protein 3CD binds to the 5'UTR of the viral genome. In terms of biological role, major viral protease that mediates proteolytic processing of the polyprotein. Cleaves host EIF5B, contributing to host translation shutoff. Cleaves also host PABPC1, contributing to host translation shutoff. Cleaves host RIGI and thus contributes to the inhibition of type I interferon production. Cleaves host NLRP1, triggers host N-glycine-mediated degradation of the autoinhibitory NLRP1 N-terminal fragment. Inhibits the integrated stress response (ISR) in the infected cell by cleaving host G3BP1. Stress granule formation is thus inhibited, which allows protein synthesis and viral replication. Functionally, replicates the viral genomic RNA on the surface of intracellular membranes. May form linear arrays of subunits that propagate along a strong head-to-tail interaction called interface-I. Covalently attaches UMP to a tyrosine of VPg, which is used to prime RNA synthesis. The positive stranded RNA genome is first replicated at virus induced membranous vesicles, creating a dsRNA genomic replication form. This dsRNA is then used as template to synthesize positive stranded RNA genomes. ss(+)RNA genomes are either translated, replicated or encapsidated. This is Genome polyprotein from Homo sapiens (Human).